The chain runs to 252 residues: Hydroxyacylglutathione hydrolase (252 aa).

7 residues coordinate Zn(2+): His-54, His-56, Asp-58, His-59, His-111, Asp-128, and His-166.

It belongs to the metallo-beta-lactamase superfamily. Glyoxalase II family. Monomer. Zn(2+) is required as a cofactor.

It catalyses the reaction an S-(2-hydroxyacyl)glutathione + H2O = a 2-hydroxy carboxylate + glutathione + H(+). It functions in the pathway secondary metabolite metabolism; methylglyoxal degradation; (R)-lactate from methylglyoxal: step 2/2. Functionally, thiolesterase that catalyzes the hydrolysis of S-D-lactoyl-glutathione to form glutathione and D-lactic acid. The protein is Hydroxyacylglutathione hydrolase of Vibrio cholerae serotype O1 (strain ATCC 39541 / Classical Ogawa 395 / O395).